The sequence spans 202 residues: MKLVEDTDSKILDTKKVSDKEAEEAFKTILTWMGEDPSREGLLETPKRVVKAFKEYFGGYTEDAEKILEKTFGDVEGYDDMVVEKNISVSSHCEHHMAPIVGTAHVAYIPNERVVGLSKLARVVEVFSKRLQTQERLTMQVAQALMTSLDAKGVAVTIDAAHQCMTMRGIKKENATTVTNYFLGEFKKDLSVQNRYLRFISK.

The Zn(2+) site is built by Cys93, His96, and Cys164.

It belongs to the GTP cyclohydrolase I family. Toroid-shaped homodecamer, composed of two pentamers of five dimers.

It catalyses the reaction GTP + H2O = 7,8-dihydroneopterin 3'-triphosphate + formate + H(+). It participates in cofactor biosynthesis; 7,8-dihydroneopterin triphosphate biosynthesis; 7,8-dihydroneopterin triphosphate from GTP: step 1/1. This chain is GTP cyclohydrolase 1, found in Pelagibacter ubique (strain HTCC1062).